The chain runs to 263 residues: Protein PUN1 (263 aa).

Residues 1–6 (MRNFFT) are Cytoplasmic-facing. A helical membrane pass occupies residues 7-27 (LFFAAIFSLGALILAIVACAG). Residues 28 to 143 (STKNYSPINK…MTYYNNLVKC (116 aa)) lie on the Extracellular side of the membrane. N-linked (GlcNAc...) asparagine glycosylation occurs at asparagine 100. The helical transmembrane segment at 144–164 (MFITILIGIVLTFVNLVFNVL) threads the bilayer. At 165-172 (RWIIHIRP) the chain is on the cytoplasmic side. Residues 173 to 193 (LTWFGAFFSFFAFAALLVSIG) traverse the membrane as a helical segment. Residues 194–223 (SCLGTYSYIKYILKHNYSDYGISMSIGRNY) are Extracellular-facing. Asparagine 209 is a glycosylation site (N-linked (GlcNAc...) asparagine). A helical transmembrane segment spans residues 224–244 (QGLMWGAVVGALLNFILWCSV). Over 245–263 (RSRPTVIYANAPIEEKPLI) the chain is Cytoplasmic. Residue lysine 260 forms a Glycyl lysine isopeptide (Lys-Gly) (interchain with G-Cter in ubiquitin) linkage.

Belongs to the SUR7 family. In terms of processing, N-glycosylated.

The protein resides in the cell membrane. Contributes to the wild-type cellular response to nitrogen stress through signaling pathways that regulate the expression of genes involved in amino acid biosynthesis. Required for wild-type filamentous growth, cell growth, and cell-cell adhesion. In Saccharomyces cerevisiae (strain ATCC 204508 / S288c) (Baker's yeast), this protein is Protein PUN1 (PUN1).